Reading from the N-terminus, the 92-residue chain is mRNA interferase toxin YafQ (92 aa).

The active-site Proton donor is H87.

It belongs to the RelE toxin family. YafQ subfamily. As to quaternary structure, monomer in the absence of antitoxin. Forms a heterotetramer with antitoxin DinJ, with 2 YafQ-DinJ dimers associated via the N-terminus of the DinJ antitoxins (YafQ-(DinJ)2-YafQ). In this complex the toxin activity is inhibited. Binds the 70S ribosome via the 50S ribosomal subunit.

Its function is as follows. Toxic component of a type II toxin-antitoxin (TA) system. A sequence-specific mRNA endoribonuclease that inhibits translation elongation and induces bacterial stasis. Cleavage occurs between the second and third residue of the Lys codon followed by a G or A (5'AAA(G/A)3'), is reading-frame dependent and occurs within the 5' end of most mRNAs. Ribosome-binding confers the sequence specificity and reading frame-dependence. When overexpressed in liquid media YafQ partially inhibits protein synthesis, with a reduction in growth rate and colony growth rate. This effect is counteracted by coexpression with cognate antitoxin DinJ. YafQ and DinJ together bind their own promoter, and repress its expression. In terms of biological role, cell death governed by the MazE-MazF and DinJ-YafQ TA systems seems to play a role in biofilm formation. In Escherichia coli (strain K12), this protein is mRNA interferase toxin YafQ (yafQ).